The sequence spans 107 residues: Large ribosomal subunit protein bL21 (107 aa).

This sequence belongs to the bacterial ribosomal protein bL21 family. Part of the 50S ribosomal subunit. Contacts protein L20.

Its function is as follows. This protein binds to 23S rRNA in the presence of protein L20. This chain is Large ribosomal subunit protein bL21, found in Pseudothermotoga lettingae (strain ATCC BAA-301 / DSM 14385 / NBRC 107922 / TMO) (Thermotoga lettingae).